The chain runs to 188 residues: Large ribosomal subunit protein uL5 (188 aa).

Belongs to the universal ribosomal protein uL5 family. Part of the 50S ribosomal subunit; contacts the 5S rRNA and probably tRNA. Forms a bridge to the 30S subunit in the 70S ribosome.

Its function is as follows. This is one of the proteins that bind and probably mediate the attachment of the 5S RNA into the large ribosomal subunit, where it forms part of the central protuberance. In the 70S ribosome it contacts protein S13 of the 30S subunit (bridge B1b), connecting the 2 subunits; this bridge is implicated in subunit movement. May contact the P site tRNA; the 5S rRNA and some of its associated proteins might help stabilize positioning of ribosome-bound tRNAs. In Pyrococcus horikoshii (strain ATCC 700860 / DSM 12428 / JCM 9974 / NBRC 100139 / OT-3), this protein is Large ribosomal subunit protein uL5.